The primary structure comprises 507 residues: MRGFFRQRRSVSPPGHPYDRTGPGEHAGPGARTGPGGRPRVLGVRGLRARGIRTGLRWKLSAAIALVGALVAIALSLVVHNAARVSMLDNARDLADDRVLIAQRNYELSGRQNFPNAQIDDPALPPELRRKIDAGRRATYVSERPDGVTDIWAAVPLKDGHVMSLHSGFTDRSADILSDLDQALVIGSIAVVLGGSALGVLIGGQLSRRLREAAAAANRVASGEPDVRVRDAIGGVVRDETDDVARAVDAMADALQQRIEAERRVTADIAHELRTPVTGLLTAAELLPPGRPTELVLDRAKAMRTLVEDVLEVARLDGASERAELQDIMLGDFVSRRVAAKDPAVEVRVIHESEVTTDPRRLERVLFNLLANAARHGRSPVEVSVEGRVIRVRDHGPGFPEDLLAEGPSRFRTGSTDRAGRGHGLGLTIAAGQARVLGARLTFRNVRPAGAPAHIPAEGAVAVLWLPEHAPTNTGSYPMLPDRSKSGASSSARDMSREASQGMSRKP.

The disordered stretch occupies residues 1–42 (MRGFFRQRRSVSPPGHPYDRTGPGEHAGPGARTGPGGRPRVL). Positions 25–37 (EHAGPGARTGPGG) are enriched in gly residues. The next 2 membrane-spanning stretches (helical) occupy residues 60–80 (LSAA…LVVH) and 183–203 (ALVI…VLIG). In terms of domain architecture, HAMP spans 204–260 (GQLSRRLREAAAAANRVASGEPDVRVRDAIGGVVRDETDDVARAVDAMADALQQRIE). The Histidine kinase domain occupies 268-470 (DIAHELRTPV…VAVLWLPEHA (203 aa)). Histidine 271 is subject to Phosphohistidine; by autocatalysis. The tract at residues 472–507 (TNTGSYPMLPDRSKSGASSSARDMSREASQGMSRKP) is disordered. Residues 486-507 (SGASSSARDMSREASQGMSRKP) are compositionally biased toward polar residues.

Its subcellular location is the cell membrane. The enzyme catalyses ATP + protein L-histidine = ADP + protein N-phospho-L-histidine.. Its function is as follows. Member of the two-component regulatory system CseB/CseC involved in the stability of the cell envelope, through activation of transcription of RNA polymerase sigma-E factor. CseC functions as a membrane-associated protein kinase that phosphorylates CseB in response to changes in the cell envelope. This Streptomyces coelicolor (strain ATCC BAA-471 / A3(2) / M145) protein is Sensor protein CseC (cseC).